Here is a 206-residue protein sequence, read N- to C-terminus: Thymidylate kinase (206 aa).

11–18 (GIDGAGKT) provides a ligand contact to ATP.

The protein belongs to the thymidylate kinase family.

It carries out the reaction dTMP + ATP = dTDP + ADP. Its function is as follows. Phosphorylation of dTMP to form dTDP in both de novo and salvage pathways of dTTP synthesis. This chain is Thymidylate kinase, found in Burkholderia cenocepacia (strain ATCC BAA-245 / DSM 16553 / LMG 16656 / NCTC 13227 / J2315 / CF5610) (Burkholderia cepacia (strain J2315)).